A 506-amino-acid chain; its full sequence is Anaerobic nitric oxide reductase transcription regulator NorR (506 aa).

Asp-57 carries the 4-aspartylphosphate modification. Positions Met-187–Val-416 constitute a Sigma-54 factor interaction domain. ATP contacts are provided by residues Gly-215 to Glu-222 and Ala-278 to Glu-287. The H-T-H motif DNA-binding region spans Trp-481–Lys-500.

It functions in the pathway nitrogen metabolism; nitric oxide reduction. Required for the expression of anaerobic nitric oxide (NO) reductase, acts as a transcriptional activator for at least the norVW operon. Activation also requires sigma-54. This is Anaerobic nitric oxide reductase transcription regulator NorR from Salmonella agona (strain SL483).